A 297-amino-acid polypeptide reads, in one-letter code: uncharacterized protein (297 aa).

This is an uncharacterized protein from Frog virus 3 (isolate Goorha) (FV-3).